The sequence spans 2465 residues: Protein DOP1A (2465 aa).

Disordered stretches follow at residues 559–600 (PSGQ…SSES), 625–646 (GAAAIPIGSTSSETETASTVGS), and 705–733 (TEHQGDLGREQGETSKWDRNSQGDVKEKN). Low complexity predominate over residues 633-646 (STSSETETASTVGS). The segment covering 707–733 (HQGDLGREQGETSKWDRNSQGDVKEKN) has biased composition (basic and acidic residues). Ser1266 bears the Phosphoserine mark. 2 stretches are compositionally biased toward basic and acidic residues: residues 1282-1291 (EKETIVKESG) and 1305-1315 (KKDDDKKKSSN). Positions 1282-1315 (EKETIVKESGKQPGAKPKVKLARKKDDDKKKSSN) are disordered.

Belongs to the DOP1 family.

It localises to the golgi apparatus membrane. May be involved in protein traffic between late Golgi and early endosomes. The polypeptide is Protein DOP1A (Homo sapiens (Human)).